We begin with the raw amino-acid sequence, 503 residues long: Maturase K (503 aa).

The protein belongs to the intron maturase 2 family. MatK subfamily.

Its subcellular location is the plastid. It is found in the chloroplast. Functionally, usually encoded in the trnK tRNA gene intron. Probably assists in splicing its own and other chloroplast group II introns. The protein is Maturase K of Aethionema cordifolium (Lebanon stonecress).